Consider the following 392-residue polypeptide: Methylthioribose-1-phosphate isomerase (392 aa).

Aspartate 268 functions as the Proton donor in the catalytic mechanism.

This sequence belongs to the eIF-2B alpha/beta/delta subunits family. MtnA subfamily.

It is found in the cytoplasm. It localises to the nucleus. The catalysed reaction is 5-(methylsulfanyl)-alpha-D-ribose 1-phosphate = 5-(methylsulfanyl)-D-ribulose 1-phosphate. It functions in the pathway amino-acid biosynthesis; L-methionine biosynthesis via salvage pathway; L-methionine from S-methyl-5-thio-alpha-D-ribose 1-phosphate: step 1/6. Its function is as follows. Catalyzes the interconversion of methylthioribose-1-phosphate (MTR-1-P) into methylthioribulose-1-phosphate (MTRu-1-P). The protein is Methylthioribose-1-phosphate isomerase of Ajellomyces capsulatus (strain G186AR / H82 / ATCC MYA-2454 / RMSCC 2432) (Darling's disease fungus).